The chain runs to 456 residues: tRNA modification GTPase MnmE (456 aa).

R25, E87, and R126 together coordinate (6S)-5-formyl-5,6,7,8-tetrahydrofolate. Residues G221–N377 enclose the TrmE-type G domain. N231 serves as a coordination point for K(+). GTP is bound by residues N231–S236, T250–T256, and D275–G278. Residue S235 participates in Mg(2+) binding. K(+)-binding residues include T250, L252, and T255. Residue T256 participates in Mg(2+) binding. A (6S)-5-formyl-5,6,7,8-tetrahydrofolate-binding site is contributed by K456.

Belongs to the TRAFAC class TrmE-Era-EngA-EngB-Septin-like GTPase superfamily. TrmE GTPase family. In terms of assembly, homodimer. Heterotetramer of two MnmE and two MnmG subunits. It depends on K(+) as a cofactor.

The protein resides in the cytoplasm. Exhibits a very high intrinsic GTPase hydrolysis rate. Involved in the addition of a carboxymethylaminomethyl (cmnm) group at the wobble position (U34) of certain tRNAs, forming tRNA-cmnm(5)s(2)U34. This chain is tRNA modification GTPase MnmE, found in Synechocystis sp. (strain ATCC 27184 / PCC 6803 / Kazusa).